We begin with the raw amino-acid sequence, 543 residues long: MTATPARRTSLASPATKPVAGGLALAFLATLAGGALLALALEAGGGGFDAAANFDTYLWRVARFTIWQAVASSLRSVLFAIPIARALYAEARFPGRGLILRLFALPLALPALVAVLGVTSIYGRNGLIAHISDMLGHPMQPDIYGIAGILIAHIFFNMPLAVRLLLAAYESIPDDYWKLAAQLGMGSRARFRLIEWPVIRRSLPGMIGLVFMLCVTSFTTVLTLGGGPRATTLEVAIYQSLHFDFDPARAVALTFTQLALTLLILLILRLTGRPSEEGFTQTATPRRYGSPRKTERLFNIIVITLGFLYVALPIAGVVVSGLTADLVRLLSERIVWHAIATSLALGFSAALLAVFLSLALVAAREATRNARIANIFDTGASLILVMPPIVIGAGWFILLRHFTDPFVMAPLMVVTVNAAMAMPFAVRLLRPAWDTAASRHNKLCSQLGIKGFNRLRLIDWPSIRRPCGMAFAFAMALSLGDLGTIALFGSDALVTLPYLLLQRMGSYRTFDAAGLALILGVLCLALMMIADRAAASRKEAFLQ.

Transmembrane regions (helical) follow at residues 19–39 (VAGG…LLAL), 64–84 (FTIW…IPIA), 102–122 (LFAL…TSIY), 142–162 (DIYG…PLAV), 205–225 (GMIG…LTLG), 250–270 (AVAL…ILRL), 300–320 (IIVI…VVVS), 343–363 (LALG…LVAA), 379–399 (GASL…FILL), 406–426 (FVMA…PFAV), 468–488 (GMAF…IALF), and 510–530 (FDAA…MMIA). An ABC transmembrane type-1 1 domain is found at 62 to 266 (ARFTIWQAVA…QLALTLLILL (205 aa)). Residues 339 to 530 (IATSLALGFS…VLCLALMMIA (192 aa)) enclose the ABC transmembrane type-1 2 domain.

The protein belongs to the binding-protein-dependent transport system permease family. CysTW subfamily. The complex is composed of two ATP-binding proteins (ThiQ), two transmembrane proteins (ThiP) and a solute-binding protein (ThiB).

The protein resides in the cell inner membrane. Functionally, part of the ABC transporter complex ThiBPQ involved in thiamine import. Probably responsible for the translocation of the substrate across the membrane. The polypeptide is Thiamine transport system permease protein ThiP (thiP) (Brucella suis biovar 1 (strain 1330)).